Here is a 210-residue protein sequence, read N- to C-terminus: Somatotropin-1 (210 aa).

Positions 1 to 22 (MGQVFLLMPVLLASCFLSQGAA) are cleaved as a signal peptide. Histidine 38 is a Zn(2+) binding site. Cysteine 71 and cysteine 183 are joined by a disulfide. Glutamate 192 contacts Zn(2+). Cysteine 200 and cysteine 208 are oxidised to a cystine.

Belongs to the somatotropin/prolactin family.

The protein resides in the secreted. Its function is as follows. Growth hormone plays an important role in growth control and is involved in the regulation of several anabolic processes. Implicated as an osmoregulatory substance important for seawater adaptation. In Oncorhynchus nerka (Sockeye salmon), this protein is Somatotropin-1 (gh1).